A 490-amino-acid chain; its full sequence is Probable cytosol aminopeptidase (490 aa).

Mn(2+) is bound by residues K256 and D261. Residue K268 is part of the active site. Mn(2+)-binding residues include D280, D340, and E342. R344 is an active-site residue.

It belongs to the peptidase M17 family. It depends on Mn(2+) as a cofactor.

The protein resides in the cytoplasm. The catalysed reaction is Release of an N-terminal amino acid, Xaa-|-Yaa-, in which Xaa is preferably Leu, but may be other amino acids including Pro although not Arg or Lys, and Yaa may be Pro. Amino acid amides and methyl esters are also readily hydrolyzed, but rates on arylamides are exceedingly low.. It catalyses the reaction Release of an N-terminal amino acid, preferentially leucine, but not glutamic or aspartic acids.. Presumably involved in the processing and regular turnover of intracellular proteins. Catalyzes the removal of unsubstituted N-terminal amino acids from various peptides. This Synechococcus sp. (strain CC9902) protein is Probable cytosol aminopeptidase.